The chain runs to 337 residues: DNA-directed RNA polymerase subunit alpha (337 aa).

The segment at 1-233 is alpha N-terminal domain (alpha-NTD); it reads MVREKVKVST…NLFIPFLHVE (233 aa). Residues 267–337 are alpha C-terminal domain (alpha-CTD); the sequence is LAFQYIFIDQ…IEKAFQKKID (71 aa).

The protein belongs to the RNA polymerase alpha chain family. In plastids the minimal PEP RNA polymerase catalytic core is composed of four subunits: alpha, beta, beta', and beta''. When a (nuclear-encoded) sigma factor is associated with the core the holoenzyme is formed, which can initiate transcription.

It is found in the plastid. The protein localises to the chloroplast. It carries out the reaction RNA(n) + a ribonucleoside 5'-triphosphate = RNA(n+1) + diphosphate. Functionally, DNA-dependent RNA polymerase catalyzes the transcription of DNA into RNA using the four ribonucleoside triphosphates as substrates. This is DNA-directed RNA polymerase subunit alpha from Arabis hirsuta (Hairy rock-cress).